Consider the following 199-residue polypeptide: Recombination protein RecR (199 aa).

The C4-type zinc-finger motif lies at Cys-58–Cys-73. A Toprim domain is found at Ala-81 to Pro-176.

The protein belongs to the RecR family.

Its function is as follows. May play a role in DNA repair. It seems to be involved in an RecBC-independent recombinational process of DNA repair. It may act with RecF and RecO. This chain is Recombination protein RecR, found in Bradyrhizobium sp. (strain ORS 278).